Consider the following 251-residue polypeptide: MSEGESKNTHFGYKTVEADKKADLVAGVFHSVAAKYDIMNDVMSFGIHRFWKRYTIEVSGARPGMKVLDLAGGTGDLTAKFSHLVGEKGEVVLADINDSMLKVGRTKLRDRGIVGNVSYVQANAEALPFPDNHFDIITIAFGLRNVTDKDAALRSMNRVLKPGGKLLVLEFSKPQHELMRKVYDLYSFKVLPKMGEIITKDADSYEYLAESIRMHPDQETLKQMMVDAGFEQVDYTNMTDGIVALHRGYKF.

S-adenosyl-L-methionine-binding positions include Thr74, Asp95, and Asn123–Ala124.

It belongs to the class I-like SAM-binding methyltransferase superfamily. MenG/UbiE family.

The enzyme catalyses a 2-demethylmenaquinol + S-adenosyl-L-methionine = a menaquinol + S-adenosyl-L-homocysteine + H(+). The catalysed reaction is a 2-methoxy-6-(all-trans-polyprenyl)benzene-1,4-diol + S-adenosyl-L-methionine = a 5-methoxy-2-methyl-3-(all-trans-polyprenyl)benzene-1,4-diol + S-adenosyl-L-homocysteine + H(+). The protein operates within quinol/quinone metabolism; menaquinone biosynthesis; menaquinol from 1,4-dihydroxy-2-naphthoate: step 2/2. It functions in the pathway cofactor biosynthesis; ubiquinone biosynthesis. Its function is as follows. Methyltransferase required for the conversion of demethylmenaquinol (DMKH2) to menaquinol (MKH2) and the conversion of 2-polyprenyl-6-methoxy-1,4-benzoquinol (DDMQH2) to 2-polyprenyl-3-methyl-6-methoxy-1,4-benzoquinol (DMQH2). This is Ubiquinone/menaquinone biosynthesis C-methyltransferase UbiE from Shewanella sp. (strain ANA-3).